We begin with the raw amino-acid sequence, 369 residues long: Putative F-box/kelch-repeat protein At4g39760 (369 aa).

One can recognise an F-box domain in the interval 14–60; the sequence is SLSFSSLPHEIVVSCLARVSGSYYPKLCLVSKQFRSIILSNEIYKAR. Kelch repeat units lie at residues 131–177, 178–224, and 228–274; these read ETYI…GQYP, NIYV…KMKM, and NVYV…KNCW.

The polypeptide is Putative F-box/kelch-repeat protein At4g39760 (Arabidopsis thaliana (Mouse-ear cress)).